The chain runs to 484 residues: Glycogen synthase 2 (484 aa).

Position 15 (Lys15) interacts with ADP-alpha-D-glucose.

This sequence belongs to the glycosyltransferase 1 family. Bacterial/plant glycogen synthase subfamily.

The catalysed reaction is [(1-&gt;4)-alpha-D-glucosyl](n) + ADP-alpha-D-glucose = [(1-&gt;4)-alpha-D-glucosyl](n+1) + ADP + H(+). It participates in glycan biosynthesis; glycogen biosynthesis. Functionally, synthesizes alpha-1,4-glucan chains using ADP-glucose. The polypeptide is Glycogen synthase 2 (Geobacter metallireducens (strain ATCC 53774 / DSM 7210 / GS-15)).